Here is a 174-residue protein sequence, read N- to C-terminus: Flavodoxin (174 aa).

The 162-residue stretch at 4-165 (VGLFYGSDTG…RVEKWCKQIY (162 aa)) folds into the Flavodoxin-like domain.

The protein belongs to the flavodoxin family. It depends on FMN as a cofactor.

In terms of biological role, low-potential electron donor to a number of redox enzymes. This chain is Flavodoxin (fldA), found in Haemophilus influenzae (strain ATCC 51907 / DSM 11121 / KW20 / Rd).